The following is a 159-amino-acid chain: SsrA-binding protein (159 aa).

The protein belongs to the SmpB family.

The protein resides in the cytoplasm. Required for rescue of stalled ribosomes mediated by trans-translation. Binds to transfer-messenger RNA (tmRNA), required for stable association of tmRNA with ribosomes. tmRNA and SmpB together mimic tRNA shape, replacing the anticodon stem-loop with SmpB. tmRNA is encoded by the ssrA gene; the 2 termini fold to resemble tRNA(Ala) and it encodes a 'tag peptide', a short internal open reading frame. During trans-translation Ala-aminoacylated tmRNA acts like a tRNA, entering the A-site of stalled ribosomes, displacing the stalled mRNA. The ribosome then switches to translate the ORF on the tmRNA; the nascent peptide is terminated with the 'tag peptide' encoded by the tmRNA and targeted for degradation. The ribosome is freed to recommence translation, which seems to be the essential function of trans-translation. The sequence is that of SsrA-binding protein from Salinispora tropica (strain ATCC BAA-916 / DSM 44818 / JCM 13857 / NBRC 105044 / CNB-440).